Here is a 449-residue protein sequence, read N- to C-terminus: Na(+)/H(+) antiporter NhaA 2 (449 aa).

11 helical membrane passes run 32–52 (IEAT…TLSN), 87–107 (GLMT…VVLG), 114–134 (MVAL…GLYL), 145–165 (GWGV…ALLG), 174–194 (VFLL…VAVG), 202–222 (TALA…LLGV), 233–253 (AIIW…GVIL), 318–338 (WVAF…PITI), 347–367 (LAVM…FAWL), 382–402 (WGGL…ALFI), and 417–437 (LGIL…LCAL).

It belongs to the NhaA Na(+)/H(+) (TC 2.A.33) antiporter family.

It localises to the cell inner membrane. The catalysed reaction is Na(+)(in) + 2 H(+)(out) = Na(+)(out) + 2 H(+)(in). Na(+)/H(+) antiporter that extrudes sodium in exchange for external protons. This is Na(+)/H(+) antiporter NhaA 2 from Acidiphilium cryptum (strain JF-5).